The primary structure comprises 423 residues: Glucose-1-phosphate adenylyltransferase (423 aa).

Alpha-D-glucose 1-phosphate contacts are provided by residues tyrosine 107, glycine 172, glutamate 187–lysine 188, and serine 205.

It belongs to the bacterial/plant glucose-1-phosphate adenylyltransferase family. Homotetramer.

The enzyme catalyses alpha-D-glucose 1-phosphate + ATP + H(+) = ADP-alpha-D-glucose + diphosphate. Its pathway is glycan biosynthesis; glycogen biosynthesis. Involved in the biosynthesis of ADP-glucose, a building block required for the elongation reactions to produce glycogen. Catalyzes the reaction between ATP and alpha-D-glucose 1-phosphate (G1P) to produce pyrophosphate and ADP-Glc. The polypeptide is Glucose-1-phosphate adenylyltransferase (Cereibacter sphaeroides (strain ATCC 17029 / ATH 2.4.9) (Rhodobacter sphaeroides)).